The primary structure comprises 565 residues: Protein nucleotidyltransferase YdiU (565 aa).

Residues Gly-118, Gly-120, Arg-121, Lys-141, Asp-153, Gly-154, Arg-211, and Arg-218 each contribute to the ATP site. Asp-290 acts as the Proton acceptor in catalysis. Residues Asn-291 and Asp-300 each coordinate Mg(2+). Asp-300 serves as a coordination point for ATP.

The protein belongs to the SELO family. Mg(2+) serves as cofactor. Mn(2+) is required as a cofactor.

It carries out the reaction L-seryl-[protein] + ATP = 3-O-(5'-adenylyl)-L-seryl-[protein] + diphosphate. The catalysed reaction is L-threonyl-[protein] + ATP = 3-O-(5'-adenylyl)-L-threonyl-[protein] + diphosphate. The enzyme catalyses L-tyrosyl-[protein] + ATP = O-(5'-adenylyl)-L-tyrosyl-[protein] + diphosphate. It catalyses the reaction L-histidyl-[protein] + UTP = N(tele)-(5'-uridylyl)-L-histidyl-[protein] + diphosphate. It carries out the reaction L-seryl-[protein] + UTP = O-(5'-uridylyl)-L-seryl-[protein] + diphosphate. The catalysed reaction is L-tyrosyl-[protein] + UTP = O-(5'-uridylyl)-L-tyrosyl-[protein] + diphosphate. In terms of biological role, nucleotidyltransferase involved in the post-translational modification of proteins. It can catalyze the addition of adenosine monophosphate (AMP) or uridine monophosphate (UMP) to a protein, resulting in modifications known as AMPylation and UMPylation. This chain is Protein nucleotidyltransferase YdiU, found in Nitrosospira multiformis (strain ATCC 25196 / NCIMB 11849 / C 71).